Reading from the N-terminus, the 142-residue chain is Large ribosomal subunit protein mL42 (142 aa).

Residues 1–31 (MAAAVKWAISNRTIWKHLLPIQNGALSSACH) constitute a mitochondrion transit peptide.

This sequence belongs to the mitochondrion-specific ribosomal protein mL42 family. In terms of assembly, component of the mitochondrial ribosome large subunit (39S) which comprises a 16S rRNA and about 50 distinct proteins. Component of the mitochondrial ribosome small subunit (28S) which comprises a 12S rRNA and about 30 distinct proteins.

It localises to the mitochondrion. The sequence is that of Large ribosomal subunit protein mL42 (Mrpl42) from Mus musculus (Mouse).